Consider the following 113-residue polypeptide: Hydrogenase maturation factor HypA (113 aa).

Position 2 (H2) interacts with Ni(2+). Zn(2+)-binding residues include C73, C76, C89, and C92.

This sequence belongs to the HypA/HybF family.

Functionally, involved in the maturation of [NiFe] hydrogenases. Required for nickel insertion into the metal center of the hydrogenase. The chain is Hydrogenase maturation factor HypA from Rhodopseudomonas palustris (strain BisA53).